We begin with the raw amino-acid sequence, 664 residues long: Prelamin-A/C (664 aa).

M1 is modified (N-acetylmethionine). The segment at 1-24 (METPSQRRATRSGAQASSTPLSPT) is disordered. The head stretch occupies residues 1–33 (METPSQRRATRSGAQASSTPLSPTRITRLQEKE). The segment at 1-130 (METPSQRRAT…TKKEGDLMAA (130 aa)) is interaction with MLIP. T3 is modified (phosphothreonine). A Phosphoserine modification is found at S5. Residue T10 is modified to Phosphothreonine. Phosphoserine occurs at positions 12 and 18. At T19 the chain carries Phosphothreonine. Position 22 is a phosphoserine (S22). One can recognise an IF rod domain in the interval 31–387 (EKEDLQELND…KLLEGEEERL (357 aa)). Position 32 is an N6-acetyllysine; alternate (K32). K32 bears the N6-succinyllysine; alternate mark. K32 participates in a covalent cross-link: Glycyl lysine isopeptide (Lys-Gly) (interchain with G-Cter in SUMO2); alternate. The coil 1A stretch occupies residues 34 to 70 (DLQELNDRLAVYIDRVRSLETENAGLRLRITESEEVV). Phosphoserine occurs at positions 51, 66, and 71. The segment at 71–80 (SREVSGIKSA) is linker 1. N6-acetyllysine occurs at positions 78 and 97. The coil 1B stretch occupies residues 81–218 (YEAELGDARK…NIYSEELRET (138 aa)). K97 participates in a covalent cross-link: Glycyl lysine isopeptide (Lys-Gly) (interchain with G-Cter in SUMO2). S107 carries the phosphoserine modification. N6-acetyllysine is present on residues K108, K114, K123, K135, K144, and K155. The residue at position 171 (K171) is an N6-acetyllysine; alternate. K171 is modified (N6-succinyllysine; alternate). K171 participates in a covalent cross-link: Glycyl lysine isopeptide (Lys-Gly) (interchain with G-Cter in SUMO2); alternate. 3 positions are modified to N6-acetyllysine: K180, K201, and K208. K201 participates in a covalent cross-link: Glycyl lysine isopeptide (Lys-Gly) (interchain with G-Cter in SUMO2); alternate. A Glycyl lysine isopeptide (Lys-Gly) (interchain with G-Cter in SUMO); alternate cross-link involves residue K201. K208 is covalently cross-linked (Glycyl lysine isopeptide (Lys-Gly) (interchain with G-Cter in SUMO2)). At S212 the chain carries Phosphoserine. Residues K219 and K233 each participate in a glycyl lysine isopeptide (Lys-Gly) (interchain with G-Cter in SUMO2) cross-link. Residues 219 to 242 (KRRHETRLVEIDNGKQREFESRLA) form a linker 2 region. Residues K233, K260, K265, and K270 each carry the N6-acetyllysine modification. The coil 2 stretch occupies residues 243–383 (DALQDLRAQH…HAYRKLLEGE (141 aa)). K260 participates in a covalent cross-link: Glycyl lysine isopeptide (Lys-Gly) (interchain with G-Cter in SUMO2); alternate. K270 is covalently cross-linked (Glycyl lysine isopeptide (Lys-Gly) (interchain with G-Cter in SUMO2); alternate). A phosphoserine mark is found at S277, S282, S301, and S307. K311 participates in a covalent cross-link: Glycyl lysine isopeptide (Lys-Gly) (interchain with G-Cter in SUMO2); alternate. N6-acetyllysine is present on residues K311, K316, and K341. Residues K366 and K378 each participate in a glycyl lysine isopeptide (Lys-Gly) (interchain with G-Cter in SUMO2) cross-link. The tract at residues 384-442 (EERLRLSPSPTSQRSRGRASSHSSQTQSGGSVTKKRKLESSESRSSFSQHARTSGRVAV) is disordered. The interval 384–664 (EERLRLSPSP…TQSPQNCSIM (281 aa)) is tail. S390, S392, S395, S398, S403, S404, S406, S407, and S414 each carry phosphoserine. Over residues 403–414 (SSHSSQTQSGGS) the composition is skewed to low complexity. T416 carries the phosphothreonine modification. Residue K417 is modified to N6-acetyllysine. Glycyl lysine isopeptide (Lys-Gly) (interchain with G-Cter in SUMO2) cross-links involve residues K417 and K420. The short motif at 417-422 (KKRKLE) is the Nuclear localization signal element. S423, S426, S429, and S431 each carry phosphoserine. In terms of domain architecture, LTD spans 428-545 (SSFSQHARTS…EEVAMRKLVR (118 aa)). A Glycyl lysine isopeptide (Lys-Gly) (interchain with G-Cter in SUMO2); alternate cross-link involves residue K450. K450 and K457 each carry N6-acetyllysine. A phosphoserine mark is found at S458 and S463. Residues K470 and K486 each participate in a glycyl lysine isopeptide (Lys-Gly) (interchain with G-Cter in SUMO2) cross-link. K486 bears the N6-acetyllysine mark. A phosphothreonine mark is found at T496 and T505. Phosphoserine is present on residues S533 and S546. Position 548 is a phosphothreonine (T548). The segment at 555–577 (DEDGDDLLHHHHGSHGSSSGDPA) is disordered. S568 and S571 each carry phosphoserine. K597 participates in a covalent cross-link: Glycyl lysine isopeptide (Lys-Gly) (interchain with G-Cter in SUMO2); alternate. K597 is covalently cross-linked (Glycyl lysine isopeptide (Lys-Gly) (interchain with G-Cter in SUMO1); alternate). The segment at 598–620 (ASASSSGAQVGGSISSGSSASSV) is disordered. S612, S613, S616, and S619 each carry phosphoserine. 2 O-linked (GlcNAc) serine glycosylation sites follow: S625 and S628. Phosphoserine occurs at positions 628, 632, and 636. The propeptide at 647-661 (LLGNSRPRTQSPQNC) is removed in Lamin-A/C form. C661 carries the cysteine methyl ester modification. C661 carries S-farnesyl cysteine lipidation. A propeptide spans 662–664 (SIM) (removed in Prelamin-A/C form and in Lamin-A/C form).

Belongs to the intermediate filament family. In terms of assembly, homodimer of lamin A and lamin C. Lamin dimers then assemble into dimeric head-to-tail polymers. Ultimately, two head-to-tail polymers assemble laterally into a protofilament with a uniformly shaped rod of 3.5 nm in diameter. Interacts with lamin-associated polypeptides IA, IB and TMPO-alpha, RB1 and with emerin. Interacts with SREBF1, SREBF2, SUN2 and TMEM43. Interacts with TMEM201. Proteolytically processed isoform A interacts with NARF. Interacts with SUN1. Interacts with MLIP. Interacts with DMPK; may regulate nuclear envelope stability. Interacts with SUV39H1; the interaction increases stability of SUV39H1. Interacts with SYNE2. Interacts with ITSN1 isoform 2. Interacts with IFFO1; enables the formation of an interior nucleoskeleton that is recruited to DNA double-strand breaks. Interacts with EMD. As to quaternary structure, interacts (via C-terminus) with LEMD2 (via N-terminus) (in vitro). In terms of processing, proteolytic cleavage of the C-terminal of 18 residues of prelamin-A/C results in the production of lamin-A/C. The prelamin-A/C maturation pathway includes farnesylation of CAAX motif by protein farnesyltransferase (FNTA and FNTB), removal of the last three amino acids (-AAX) by RCE1/FACE2 and/or ZMPSTE24, methylation of the C-terminal cysteine by ICMT and endoproteolytic removal of the last 15 C-terminal amino acids by ZMPSTE24. Proteolytic cleavage requires prior farnesylation and methylation, and absence of these blocks cleavage. Post-translationally, farnesylation of prelamin-A/C facilitates nuclear envelope targeting. Phosphorylation plays a key role in lamin organization, subcellular localization and nuclear envelope disintegration. Phosphorylation by CDK1 at Ser-22 and Ser-392 at the onset of mitosis drives lamin disassembly and nuclear envelope breakdown. Phosphorylation at Ser-22 and Ser-392 during interphase promotes localization to the nucleoplasm and regulates lamina assembly. Phosphorylation at Ser-22, Ser-392 and Ser-628 during interphase causes redistribution between the nucleus and the cytoplasm. Phosphorylation at Ser-22 by CDK1 regulates matrix stiffness. Phosphorylation status of Ser-22 determines its localization between double-strand break (DSB) sites and the nuclear matrix. Phosphorylated by ATR at Ser-282 in response to DNA damage, leading to lamin disassembly and nuclear envelope rupture. Phosphorylation also regulates stability in micronuclei arising from genome instability: phosphorylation at Ser-395 by ATR in response to genome instability and double-stranded DNA breaks primes LMNA for subsequent phosphorylation at Ser-392 by CDK1 and micronuclei envelope rupture. The rupture of micronuclear envelope triggers the cGAS-STING pathway thereby activating the type I interferon response and innate immunity. In terms of processing, acetylation by KAT8 is required for nuclear architecture. Post-translationally, sumoylation is necessary for the localization to the nuclear envelope.

The protein localises to the nucleus lamina. It localises to the nucleus envelope. Its subcellular location is the nucleus. The protein resides in the nucleoplasm. It is found in the nucleus matrix. In terms of biological role, lamins are intermediate filament proteins that assemble into a filamentous meshwork, and which constitute the major components of the nuclear lamina, a fibrous layer on the nucleoplasmic side of the inner nuclear membrane. Lamins provide a framework for the nuclear envelope, bridging the nuclear envelope and chromatin, thereby playing an important role in nuclear assembly, chromatin organization, nuclear membrane and telomere dynamics. Lamin A and C also regulate matrix stiffness by conferring nuclear mechanical properties. The structural integrity of the lamina is strictly controlled by the cell cycle, as seen by the disintegration and formation of the nuclear envelope in prophase and telophase, respectively. Lamin A and C are present in equal amounts in the lamina of mammals. Also invoved in DNA repair: recruited by DNA repair proteins XRCC4 and IFFO1 to the DNA double-strand breaks (DSBs) to prevent chromosome translocation by immobilizing broken DNA ends. Required for normal development of peripheral nervous system and skeletal muscle and for muscle satellite cell proliferation. Required for osteoblastogenesis and bone formation. Also prevents fat infiltration of muscle and bone marrow, helping to maintain the volume and strength of skeletal muscle and bone. Required for cardiac homeostasis. Functionally, prelamin-A/C can accelerate smooth muscle cell senescence. It acts to disrupt mitosis and induce DNA damage in vascular smooth muscle cells (VSMCs), leading to mitotic failure, genomic instability, and premature senescence. This chain is Prelamin-A/C (LMNA), found in Sus scrofa (Pig).